The chain runs to 410 residues: Chitinase-3-like protein 1 (410 aa).

A signal peptide spans Met1 to Ala48. In terms of domain architecture, GH18 spans Tyr49–Thr410. A disulfide bridge links Cys53 with Cys78. An N-linked (GlcNAc...) asparagine glycan is attached at Asn87. Residues Glu97–Trp98, Gly124–Asn127, Tyr168, Met231–Asp234, and Arg290 contribute to the chitin site. Cysteines 327 and 391 form a disulfide. Positions Gln351–Val365 are important for AKT1 activation and IL8 production. Position 379 (Trp379) interacts with chitin.

It belongs to the glycosyl hydrolase 18 family. In terms of assembly, monomer.

It localises to the secreted. Its subcellular location is the extracellular space. The protein localises to the cytoplasm. The protein resides in the perinuclear region. It is found in the endoplasmic reticulum. Functionally, carbohydrate-binding lectin with a preference for chitin. Has no chitinase activity. May play a role in tissue remodeling and in the capacity of cells to respond to and cope with changes in their environment. Plays a role in T-helper cell type 2 (Th2) inflammatory response and IL-13-induced inflammation, regulating allergen sensitization, inflammatory cell apoptosis, dendritic cell accumulation and M2 macrophage differentiation. Facilitates invasion of pathogenic enteric bacteria into colonic mucosa and lymphoid organs. Mediates activation of AKT1 signaling pathway and subsequent IL8 production in colonic epithelial cells. Regulates antibacterial responses in lung by contributing to macrophage bacterial killing, controlling bacterial dissemination and augmenting host tolerance. Also regulates hyperoxia-induced injury, inflammation and epithelial apoptosis in lung. This chain is Chitinase-3-like protein 1 (CHI3L1), found in Pongo abelii (Sumatran orangutan).